The following is a 125-amino-acid chain: Small ribosomal subunit protein bS6 (125 aa).

The disordered stretch occupies residues 96–125; sequence VTAPSPMMREEKAKSAPQPAEEAKETTLAT. The segment covering 116–125 has biased composition (basic and acidic residues); sequence EEAKETTLAT.

It belongs to the bacterial ribosomal protein bS6 family.

Its function is as follows. Binds together with bS18 to 16S ribosomal RNA. The polypeptide is Small ribosomal subunit protein bS6 (Nitrosospira multiformis (strain ATCC 25196 / NCIMB 11849 / C 71)).